Consider the following 568-residue polypeptide: DNA ligase 2 (568 aa).

E254 is a binding site for ATP. The active-site N6-AMP-lysine intermediate is the K256. ATP-binding residues include R261, R276, E306, F346, R425, and K431.

Belongs to the ATP-dependent DNA ligase family. It depends on Mg(2+) as a cofactor.

It catalyses the reaction ATP + (deoxyribonucleotide)n-3'-hydroxyl + 5'-phospho-(deoxyribonucleotide)m = (deoxyribonucleotide)n+m + AMP + diphosphate.. In terms of biological role, DNA ligase that seals nicks in double-stranded DNA during DNA replication, DNA recombination and DNA repair. This is DNA ligase 2 from Methanosarcina acetivorans (strain ATCC 35395 / DSM 2834 / JCM 12185 / C2A).